Reading from the N-terminus, the 244-residue chain is NAD-dependent protein deacylase SIR2rp3 (244 aa).

The 239-residue stretch at 1 to 239 (MRRPNGMIAI…PAWADEVLHG (239 aa)) folds into the Deacetylase sirtuin-type domain. 13–32 (GAGISAESGISTFRDQNGLW) contacts NAD(+). Residues Tyr-57 and Arg-60 each contribute to the substrate site. 95 to 98 (QNID) is an NAD(+) binding site. The active-site Proton acceptor is His-113. Positions 121 and 141 each coordinate Zn(2+). NAD(+) contacts are provided by residues 181–183 (GTS) and Ala-225.

It belongs to the sirtuin family. Class III subfamily. Zn(2+) is required as a cofactor.

It is found in the mitochondrion. It catalyses the reaction N(6)-malonyl-L-lysyl-[protein] + NAD(+) + H2O = 2''-O-malonyl-ADP-D-ribose + nicotinamide + L-lysyl-[protein]. The catalysed reaction is N(6)-succinyl-L-lysyl-[protein] + NAD(+) + H2O = 2''-O-succinyl-ADP-D-ribose + nicotinamide + L-lysyl-[protein]. It carries out the reaction N(6)-glutaryl-L-lysyl-[protein] + NAD(+) + H2O = 2''-O-glutaryl-ADP-D-ribose + nicotinamide + L-lysyl-[protein]. Its function is as follows. NAD-dependent lysine demalonylase, desuccinylase and deglutarylase that specifically removes malonyl, succinyl and glutaryl groups on target proteins. Has weak NAD-dependent protein deacetylase activity; however this activity may not be physiologically relevant in vivo. In Trypanosoma brucei brucei (strain 927/4 GUTat10.1), this protein is NAD-dependent protein deacylase SIR2rp3 (SIR2rp3).